Consider the following 87-residue polypeptide: Small ribosomal subunit protein uS17 (87 aa).

It belongs to the universal ribosomal protein uS17 family. As to quaternary structure, part of the 30S ribosomal subunit.

One of the primary rRNA binding proteins, it binds specifically to the 5'-end of 16S ribosomal RNA. The polypeptide is Small ribosomal subunit protein uS17 (Neisseria gonorrhoeae (strain ATCC 700825 / FA 1090)).